The following is a 71-amino-acid chain: Large ribosomal subunit protein bL31 (71 aa).

Residues Cys-16, Cys-18, Cys-37, and Cys-40 each coordinate Zn(2+).

It belongs to the bacterial ribosomal protein bL31 family. Type A subfamily. As to quaternary structure, part of the 50S ribosomal subunit. Requires Zn(2+) as cofactor.

In terms of biological role, binds the 23S rRNA. This is Large ribosomal subunit protein bL31 from Yersinia pseudotuberculosis serotype O:1b (strain IP 31758).